A 261-amino-acid chain; its full sequence is Proteasome subunit alpha type-4 (261 aa).

Serine 13 and serine 75 each carry phosphoserine. Lysine 127 carries the N6-acetyllysine modification. Phosphoserine is present on serine 173. Lysine 176 carries the N6-acetyllysine modification. The disordered stretch occupies residues 240 to 261 (HEEEEAKAEREKKEKEQKEKDK).

The protein belongs to the peptidase T1A family. As to quaternary structure, the 26S proteasome consists of a 20S proteasome core and two 19S regulatory subunits. The 20S proteasome core is a barrel-shaped complex made of 28 subunits that are arranged in four stacked rings. The two outer rings are each formed by seven alpha subunits, and the two inner rings are formed by seven beta subunits. The proteolytic activity is exerted by three beta-subunits PSMB5, PSMB6 and PSMB7.

The protein localises to the cytoplasm. It localises to the nucleus. In terms of biological role, component of the 20S core proteasome complex involved in the proteolytic degradation of most intracellular proteins. This complex plays numerous essential roles within the cell by associating with different regulatory particles. Associated with two 19S regulatory particles, forms the 26S proteasome and thus participates in the ATP-dependent degradation of ubiquitinated proteins. The 26S proteasome plays a key role in the maintenance of protein homeostasis by removing misfolded or damaged proteins that could impair cellular functions, and by removing proteins whose functions are no longer required. Associated with the PA200 or PA28, the 20S proteasome mediates ubiquitin-independent protein degradation. This type of proteolysis is required in several pathways including spermatogenesis (20S-PA200 complex) or generation of a subset of MHC class I-presented antigenic peptides (20S-PA28 complex). This chain is Proteasome subunit alpha type-4 (PSMA4), found in Bos taurus (Bovine).